Reading from the N-terminus, the 313-residue chain is Putative S-adenosyl-L-methionine-dependent methyltransferase MAV_5149 (313 aa).

Residues aspartate 135 and 164-165 (DL) contribute to the S-adenosyl-L-methionine site.

The protein belongs to the UPF0677 family.

Exhibits S-adenosyl-L-methionine-dependent methyltransferase activity. The protein is Putative S-adenosyl-L-methionine-dependent methyltransferase MAV_5149 of Mycobacterium avium (strain 104).